The chain runs to 313 residues: PDCD10 and GCKIII kinases-associated protein 1 (313 aa).

Residues 42-95 are disordered; it reads KGTQNSEVEVPGSTLHSGSLSKPDSSGSTTGLPCQGSLTQEDSEERPCVEKHGI. A compositionally biased stretch (low complexity) spans 58-69; the sequence is SGSLSKPDSSGS. Ser-60 bears the Phosphoserine mark. Residues 70 to 81 show a composition bias toward polar residues; it reads TTGLPCQGSLTQ. Thr-104 is modified (phosphothreonine). Phosphoserine occurs at positions 107, 237, and 240. The tract at residues 253-288 is disordered; sequence YFKEEDPTQPTPVADPGNEREDPHTYNGNKEGAVVD.

As to quaternary structure, interacts with KEAP1; this interaction prevents the ubiquitination of KEAP1 by TRIM25, thus protecting KEAP1 from degradation. Found in association with PDCD10 and members of the STE20 kinases, such as STK24, STK25, and STK26.

The protein resides in the cell membrane. In terms of biological role, acts as a tumor suppressor. Acts as a tumor suppressor for colorectal cancer cell proliferation by targeting KEAP1/USP17/ELK1/CDK6 axis. The polypeptide is PDCD10 and GCKIII kinases-associated protein 1 (Rattus norvegicus (Rat)).